The primary structure comprises 268 residues: Shikimate dehydrogenase (NADP(+)) (268 aa).

Shikimate-binding positions include 14–16 (SKS) and Thr-61. Lys-65 acts as the Proton acceptor in catalysis. Asn-86 and Asp-102 together coordinate shikimate. NADP(+) contacts are provided by residues 126–130 (GAGGA), 149–154 (NRTFSK), and Met-213. Residue Tyr-215 participates in shikimate binding. Gly-238 lines the NADP(+) pocket.

Belongs to the shikimate dehydrogenase family. Homodimer.

It catalyses the reaction shikimate + NADP(+) = 3-dehydroshikimate + NADPH + H(+). Its pathway is metabolic intermediate biosynthesis; chorismate biosynthesis; chorismate from D-erythrose 4-phosphate and phosphoenolpyruvate: step 4/7. Involved in the biosynthesis of the chorismate, which leads to the biosynthesis of aromatic amino acids. Catalyzes the reversible NADPH linked reduction of 3-dehydroshikimate (DHSA) to yield shikimate (SA). The sequence is that of Shikimate dehydrogenase (NADP(+)) from Haemophilus influenzae (strain PittEE).